We begin with the raw amino-acid sequence, 478 residues long: MSSYSESPKLPVREIPGDYGFPIISAIKDRYDYFYNQGEDAWFHGKAEKYKSTVVKINMAPGPFTSNDYKLVAFLDATSFVYMFDNTLIDKTDTLGGTFKPGKEYYGGYRPVAFVDTKDPNHAALKGYILSSFAKRHNLFIPLFRNSLSDHLFNDLEKQVSEQGKSDFNALLPNMTFGFIFRLLCDQTNPSDTVLGAQGPEHLRKWLFPQLIPSLSARKLPSFIEDLLFHNFLIPFGFVKSDYQKLVDAFSKSAVSMLDEAEKLGIKREEAVHNMLFLVGINMFAGLNAFFPHLIRFVGEAGPNLHTRLANEIRTAIKEEGGAITLSAINKMSLVKSVVYETLRLRPPVPLQYGKAKKDFMVQSHDASYKINKGQFLVGYNPMASRDPKIFANPDEFVPDRFMGDGEKMLKHVLWSNGRETENPAPENKQCAGKDLVQLLGRLILVEFFMRYDTFTVEITPLFRAPNVAIKTLTKATS.

C431 serves as a coordination point for heme.

Belongs to the cytochrome P450 family. 9-divinyl ether synthase subfamily.

The catalysed reaction is (9S)-hydroperoxy-(10E,12Z)-octadecadienoate = colneleate + H2O. Involved in the biosynthesis of the anti-fungal toxins colneleic acid and colnelenic acid. The sequence is that of 9-divinyl ether synthase (DES) from Capsicum annuum (Capsicum pepper).